Here is a 79-residue protein sequence, read N- to C-terminus: Acyl carrier protein (79 aa).

In terms of domain architecture, Carrier spans 3-78 (QEILEKVRSI…DAVSYIQEKK (76 aa)). Position 38 is an O-(pantetheine 4'-phosphoryl)serine (serine 38).

This sequence belongs to the acyl carrier protein (ACP) family. 4'-phosphopantetheine is transferred from CoA to a specific serine of apo-ACP by AcpS. This modification is essential for activity because fatty acids are bound in thioester linkage to the sulfhydryl of the prosthetic group.

Its subcellular location is the cytoplasm. It functions in the pathway lipid metabolism; fatty acid biosynthesis. Its function is as follows. Carrier of the growing fatty acid chain in fatty acid biosynthesis. The sequence is that of Acyl carrier protein from Synechococcus sp. (strain RCC307).